A 453-amino-acid polypeptide reads, in one-letter code: Bifunctional protein GlmU (453 aa).

The interval 1 to 231 is pyrophosphorylase; that stretch reads MERTCLAVIL…EIEMTGCNNR (231 aa). Residues 10–13, Lys-24, Gln-77, 82–83, 105–107, Gly-143, Glu-157, Asn-172, and Asn-229 each bind UDP-N-acetyl-alpha-D-glucosamine; these read LAAG, GT, and YGD. A Mg(2+)-binding site is contributed by Asp-107. Asn-229 provides a ligand contact to Mg(2+). Positions 232–252 are linker; it reads AELAVIERFWQERRRREMMLA. The segment at 253 to 453 is N-acetyltransferase; that stretch reads GVTMIAPETV…AIKAAKKAEA (201 aa). UDP-N-acetyl-alpha-D-glucosamine-binding residues include Arg-318 and Lys-336. Residue His-348 is the Proton acceptor of the active site. Residues Tyr-351 and Asn-362 each coordinate UDP-N-acetyl-alpha-D-glucosamine. Residues Ala-365, 371–372, Ser-390, Ser-408, and Arg-425 contribute to the acetyl-CoA site; that span reads NY.

The protein in the N-terminal section; belongs to the N-acetylglucosamine-1-phosphate uridyltransferase family. In the C-terminal section; belongs to the transferase hexapeptide repeat family. In terms of assembly, homotrimer. Requires Mg(2+) as cofactor.

Its subcellular location is the cytoplasm. It carries out the reaction alpha-D-glucosamine 1-phosphate + acetyl-CoA = N-acetyl-alpha-D-glucosamine 1-phosphate + CoA + H(+). The enzyme catalyses N-acetyl-alpha-D-glucosamine 1-phosphate + UTP + H(+) = UDP-N-acetyl-alpha-D-glucosamine + diphosphate. It functions in the pathway nucleotide-sugar biosynthesis; UDP-N-acetyl-alpha-D-glucosamine biosynthesis; N-acetyl-alpha-D-glucosamine 1-phosphate from alpha-D-glucosamine 6-phosphate (route II): step 2/2. The protein operates within nucleotide-sugar biosynthesis; UDP-N-acetyl-alpha-D-glucosamine biosynthesis; UDP-N-acetyl-alpha-D-glucosamine from N-acetyl-alpha-D-glucosamine 1-phosphate: step 1/1. It participates in bacterial outer membrane biogenesis; LPS lipid A biosynthesis. Catalyzes the last two sequential reactions in the de novo biosynthetic pathway for UDP-N-acetylglucosamine (UDP-GlcNAc). The C-terminal domain catalyzes the transfer of acetyl group from acetyl coenzyme A to glucosamine-1-phosphate (GlcN-1-P) to produce N-acetylglucosamine-1-phosphate (GlcNAc-1-P), which is converted into UDP-GlcNAc by the transfer of uridine 5-monophosphate (from uridine 5-triphosphate), a reaction catalyzed by the N-terminal domain. This chain is Bifunctional protein GlmU, found in Rhizobium etli (strain ATCC 51251 / DSM 11541 / JCM 21823 / NBRC 15573 / CFN 42).